The primary structure comprises 303 residues: 5'-3' exonuclease (303 aa).

The 5'-3' exonuclease domain maps to 179 to 262; it reads ISPAQWVDVK…LATITTEIEA (84 aa).

Functionally, 5'-3' exonuclease acting preferentially on double-stranded DNA. This is 5'-3' exonuclease from Halalkalibacterium halodurans (strain ATCC BAA-125 / DSM 18197 / FERM 7344 / JCM 9153 / C-125) (Bacillus halodurans).